Reading from the N-terminus, the 248-residue chain is Anamorsin homolog (248 aa).

An N-terminal SAM-like domain region spans residues 4–129 (FKGLQKSLYI…ETGSSARLSF (126 aa)). Residues 130–161 (AKKNANAVNVWKISGDDEELIDEEELLDEEDK) form a linker region. The [2Fe-2S] cluster site is built by Cys-172, Cys-181, Cys-184, and Cys-186. Residues 172-186 (CSTTGKRKACKNCSC) form a fe-S binding site A region. [4Fe-4S] cluster contacts are provided by Cys-209, Cys-212, Cys-220, and Cys-223. 2 consecutive short sequence motifs (cx2C motif) follow at residues 209–212 (CGNC) and 220–223 (CSTC). Residues 209–223 (CGNCYLGDAFRCSTC) form a fe-S binding site B region.

The protein belongs to the anamorsin family. Monomer. It depends on [2Fe-2S] cluster as a cofactor. The cofactor is [4Fe-4S] cluster.

Its subcellular location is the cytoplasm. It is found in the mitochondrion intermembrane space. Component of the cytosolic iron-sulfur (Fe-S) protein assembly (CIA) machinery. Required for the maturation of extramitochondrial Fe-S proteins. Part of an electron transfer chain functioning in an early step of cytosolic Fe-S biogenesis, facilitating the de novo assembly of a [4Fe-4S] cluster on the cytosolic Fe-S scaffold complex. Electrons are transferred from NADPH via a FAD- and FMN-containing diflavin oxidoreductase. Together with the diflavin oxidoreductase, also required for the assembly of the diferric tyrosyl radical cofactor of ribonucleotide reductase (RNR), probably by providing electrons for reduction during radical cofactor maturation in the catalytic small subunit. This is Anamorsin homolog from Drosophila simulans (Fruit fly).